The chain runs to 141 residues: Nucleoside diphosphate kinase (141 aa).

K11, F59, R87, T93, R104, and N114 together coordinate ATP. The Pros-phosphohistidine intermediate role is filled by H117.

Belongs to the NDK family. Homotetramer. Mg(2+) is required as a cofactor.

Its subcellular location is the cytoplasm. The catalysed reaction is a 2'-deoxyribonucleoside 5'-diphosphate + ATP = a 2'-deoxyribonucleoside 5'-triphosphate + ADP. The enzyme catalyses a ribonucleoside 5'-diphosphate + ATP = a ribonucleoside 5'-triphosphate + ADP. In terms of biological role, major role in the synthesis of nucleoside triphosphates other than ATP. The ATP gamma phosphate is transferred to the NDP beta phosphate via a ping-pong mechanism, using a phosphorylated active-site intermediate. This is Nucleoside diphosphate kinase from Histophilus somni (strain 2336) (Haemophilus somnus).